The chain runs to 792 residues: 5-methyltetrahydropteroyltriglutamate--homocysteine methyltransferase (792 aa).

5-methyltetrahydropteroyltri-L-glutamate is bound by residues 16-19 (RELK) and K112. L-homocysteine contacts are provided by residues 432-434 (IGS) and E485. L-methionine-binding positions include 432–434 (IGS) and E485. Residues 516 to 517 (RC) and W562 each bind 5-methyltetrahydropteroyltri-L-glutamate. Residue D600 coordinates L-homocysteine. L-methionine is bound at residue D600. E606 contributes to the 5-methyltetrahydropteroyltri-L-glutamate binding site. H642, C644, and E666 together coordinate Zn(2+). H695 serves as the catalytic Proton donor. Position 727 (C727) interacts with Zn(2+).

The protein belongs to the vitamin-B12 independent methionine synthase family. Zn(2+) is required as a cofactor.

It catalyses the reaction 5-methyltetrahydropteroyltri-L-glutamate + L-homocysteine = tetrahydropteroyltri-L-glutamate + L-methionine. Its pathway is amino-acid biosynthesis; L-methionine biosynthesis via de novo pathway; L-methionine from L-homocysteine (MetE route): step 1/1. Its function is as follows. Catalyzes the transfer of a methyl group from 5-methyltetrahydrofolate to homocysteine resulting in methionine formation. The chain is 5-methyltetrahydropteroyltriglutamate--homocysteine methyltransferase from Cupriavidus necator (strain ATCC 17699 / DSM 428 / KCTC 22496 / NCIMB 10442 / H16 / Stanier 337) (Ralstonia eutropha).